A 202-amino-acid chain; its full sequence is Peptide methionine sulfoxide reductase B1, chloroplastic (202 aa).

The N-terminal 63 residues, 1–63 (MASSTRLTII…SSSPKPDNVQ (63 aa)), are a transit peptide targeting the chloroplast. The segment at 48 to 67 (YSMGSSSSSPKPDNVQEAEK) is disordered. The region spanning 75–197 (ENEWKKRLTP…NSAALKLNAL (123 aa)) is the MsrB domain. Zn(2+) contacts are provided by cysteine 114, cysteine 117, cysteine 163, and cysteine 166. Cysteine 186 (nucleophile) is an active-site residue.

It belongs to the MsrB Met sulfoxide reductase family. It depends on Zn(2+) as a cofactor. In terms of tissue distribution, expressed at low levels in stems, leaves, floral buds, flowers and siliques (at protein level).

It is found in the plastid. It localises to the chloroplast. It carries out the reaction L-methionyl-[protein] + [thioredoxin]-disulfide + H2O = L-methionyl-(R)-S-oxide-[protein] + [thioredoxin]-dithiol. Its function is as follows. Catalyzes the reduction of methionine sulfoxide (MetSO) to methionine in proteins. Specifically reduces the MetSO R-enantiomer. Plays a protective role against oxidative stress by restoring activity to proteins that have been inactivated by methionine oxidation. May play an essential function in association with MSRB2 in maintaining vegetative growth during environmental constraints, through the preservation of photosynthetic antennae. MSRB1 and MSRB2 account for most of the leaf peptide MSR capacity. This is Peptide methionine sulfoxide reductase B1, chloroplastic from Arabidopsis thaliana (Mouse-ear cress).